The chain runs to 363 residues: Spermidine/putrescine import ATP-binding protein PotA (363 aa).

An ABC transporter domain is found at 9–239; it reads IDVRNAVKRY…PANRFVADFI (231 aa). 41–48 serves as a coordination point for ATP; the sequence is GPSGCGKT.

Belongs to the ABC transporter superfamily. Spermidine/putrescine importer (TC 3.A.1.11.1) family. As to quaternary structure, the complex is composed of two ATP-binding proteins (PotA), two transmembrane proteins (PotB and PotC) and a solute-binding protein (PotD).

It is found in the cell inner membrane. It carries out the reaction ATP + H2O + polyamine-[polyamine-binding protein]Side 1 = ADP + phosphate + polyamineSide 2 + [polyamine-binding protein]Side 1.. Functionally, part of the ABC transporter complex PotABCD involved in spermidine/putrescine import. Responsible for energy coupling to the transport system. The chain is Spermidine/putrescine import ATP-binding protein PotA from Roseobacter denitrificans (strain ATCC 33942 / OCh 114) (Erythrobacter sp. (strain OCh 114)).